The chain runs to 48 residues: Light-harvesting polypeptide B-885 beta-2 chain (48 aa).

At 1–20 (AEDRKSLSGLTEQEAQEFGT) the chain is on the cytoplasmic side. The helical transmembrane segment at 21-43 (LYTQGVAFVAVIAIVAHALVWAW) threads the bilayer. An a bacteriochlorophyll-binding site is contributed by H37. The Periplasmic portion of the chain corresponds to 44–48 (RPWLQ).

It belongs to the antenna complex beta subunit family. In terms of assembly, the core complex is formed by different alpha and beta chains, binding bacteriochlorophyll molecules, and arranged most probably in tetrameric structures disposed around the reaction center. The non-pigmented gamma chains may constitute additional components.

It is found in the cell inner membrane. In terms of biological role, antenna complexes are light-harvesting systems, which transfer the excitation energy to the reaction centers. The polypeptide is Light-harvesting polypeptide B-885 beta-2 chain (Rhodocyclus tenuis (Rhodospirillum tenue)).